The primary structure comprises 412 residues: MASCAEPSEPSAPLPAGVPPLEDFEVLDGVEDAEGEEEEEEEEEEEDDLSELPPLEDMGQPPAEEAEQPGALAREFLAAMEPEPAPAPAPEEWLDILGNGLLRKKTLVPGPPGSSRPVKGQVVTVHLQTSLENGTRVQEEPELVFTLGDCDVIQALDLSVPLMDVGETAMVTADSKYCYGPQGRSPYIPPHAALCLEVTLKTAVDGPDLEMLTGQERVALANRKRECGNAHYQRADFVLAANSYDLAIKAITSSAKVDMTFEEEAQLLQLKVKCLNNLAASQLKLDHYRAALRSCSLVLEHQPDNIKALFRKGKVLAQQGEYSEAIPILRAALKLEPSNKTIHAELSKLVKKHAAQRSTETALYRKMLGNPSRLPAKCPGKGAWSIPWKWLFGATAVALGGVALSVVIAARN.

The tract at residues 1–68 is disordered; the sequence is MASCAEPSEP…GQPPAEEAEQ (68 aa). Over residues 22–50 the composition is skewed to acidic residues; that stretch reads EDFEVLDGVEDAEGEEEEEEEEEEEDDLS. Residues 120–204 form the PPIase FKBP-type domain; it reads GQVVTVHLQT…CLEVTLKTAV (85 aa). Positions 149 and 151 each coordinate Ca(2+). A TPR 1 repeat occupies 221-254; the sequence is ANRKRECGNAHYQRADFVLAANSYDLAIKAITSS. Residues Lys-249, Lys-271, Lys-273, and Lys-284 each participate in a glycyl lysine isopeptide (Lys-Gly) (interchain with G-Cter in ubiquitin) cross-link. 2 TPR repeats span residues 272–305 and 306–339; these read VKCL…QPDN and IKAL…EPSN. Ser-296 bears the Phosphoserine mark. Glycyl lysine isopeptide (Lys-Gly) (interchain with G-Cter in ubiquitin) cross-links involve residues Lys-307, Lys-314, Lys-334, Lys-340, Lys-348, Lys-351, and Lys-352. Residues 390 to 410 form a helical membrane-spanning segment; the sequence is WLFGATAVALGGVALSVVIAA.

In terms of assembly, homomultimers or heteromultimers (Potential). Forms heterodimer with calmodulin. When activated by calmodulin and calcium, interacts with the BH4 domain of BCL2 and weakly with BCL2L1/BCLX isoform Bcl-X(L). Does not bind and inhibit calcineurin. Interacts with ZFYVE27; may negatively regulate ZFYVE27 phosphorylation. (Microbial infection) Interacts with hepatitis C/HCV protein NS5A. Requires Ca(2+) as cofactor. In terms of processing, ubiquitinated by PRKN during mitophagy, leading to its degradation and enhancement of mitophagy. Deubiquitinated by USP30. As to expression, widely expressed. Highest levels seen in the brain. Highly abundant in the retina.

Its subcellular location is the mitochondrion. The protein resides in the mitochondrion membrane. The enzyme catalyses [protein]-peptidylproline (omega=180) = [protein]-peptidylproline (omega=0). In terms of biological role, constitutively inactive PPiase, which becomes active when bound to calmodulin and calcium. Seems to act as a chaperone for BCL2, targets it to the mitochondria and modulates its phosphorylation state. The BCL2/FKBP8/calmodulin/calcium complex probably interferes with the binding of BCL2 to its targets. The active form of FKBP8 may therefore play a role in the regulation of apoptosis. Involved in the inhibition of viral infection by influenza A viruses (IAV). The polypeptide is Peptidyl-prolyl cis-trans isomerase FKBP8 (FKBP8) (Homo sapiens (Human)).